The chain runs to 255 residues: 20 kDa chaperonin, chloroplastic (255 aa).

A chloroplast-targeting transit peptide spans 1 to 53 (MAATHLTSTSSLTINTLPSFEGLRSASGISKINVSVAYPSFTSRSFRGLVVRA). Cpn-10 domain regions lie at residues 54 to 156 (ASIT…ILET) and 157 to 255 (DDVK…AVLS).

This sequence belongs to the GroES chaperonin family. Forms stable complexes with CPN60 in the presence of ATP.

It is found in the plastid. It localises to the chloroplast. Seems to function only as a co-chaperone, along with cpn60, and in certain cases is essential for the discharge of biologically active proteins from cpn60. The polypeptide is 20 kDa chaperonin, chloroplastic (CPN21) (Spinacia oleracea (Spinach)).